The primary structure comprises 360 residues: Holliday junction branch migration complex subunit RuvB (360 aa).

The segment at H4–Y196 is large ATPase domain (RuvB-L). Residues L35, R36, G77, K80, T81, T82, E143–F145, R186, Y196, and R233 each bind ATP. Residue T81 participates in Mg(2+) binding. The small ATPAse domain (RuvB-S) stretch occupies residues E197 to E267. Residues Q270 to D360 are head domain (RuvB-H). DNA contacts are provided by R306, R325, and R330.

The protein belongs to the RuvB family. Homohexamer. Forms an RuvA(8)-RuvB(12)-Holliday junction (HJ) complex. HJ DNA is sandwiched between 2 RuvA tetramers; dsDNA enters through RuvA and exits via RuvB. An RuvB hexamer assembles on each DNA strand where it exits the tetramer. Each RuvB hexamer is contacted by two RuvA subunits (via domain III) on 2 adjacent RuvB subunits; this complex drives branch migration. In the full resolvosome a probable DNA-RuvA(4)-RuvB(12)-RuvC(2) complex forms which resolves the HJ.

Its subcellular location is the cytoplasm. The catalysed reaction is ATP + H2O = ADP + phosphate + H(+). Functionally, the RuvA-RuvB-RuvC complex processes Holliday junction (HJ) DNA during genetic recombination and DNA repair, while the RuvA-RuvB complex plays an important role in the rescue of blocked DNA replication forks via replication fork reversal (RFR). RuvA specifically binds to HJ cruciform DNA, conferring on it an open structure. The RuvB hexamer acts as an ATP-dependent pump, pulling dsDNA into and through the RuvAB complex. RuvB forms 2 homohexamers on either side of HJ DNA bound by 1 or 2 RuvA tetramers; 4 subunits per hexamer contact DNA at a time. Coordinated motions by a converter formed by DNA-disengaged RuvB subunits stimulates ATP hydrolysis and nucleotide exchange. Immobilization of the converter enables RuvB to convert the ATP-contained energy into a lever motion, pulling 2 nucleotides of DNA out of the RuvA tetramer per ATP hydrolyzed, thus driving DNA branch migration. The RuvB motors rotate together with the DNA substrate, which together with the progressing nucleotide cycle form the mechanistic basis for DNA recombination by continuous HJ branch migration. Branch migration allows RuvC to scan DNA until it finds its consensus sequence, where it cleaves and resolves cruciform DNA. The sequence is that of Holliday junction branch migration complex subunit RuvB from Nocardioides sp. (strain ATCC BAA-499 / JS614).